Consider the following 306-residue polypeptide: Protein-methionine-sulfoxide reductase catalytic subunit MsrP (306 aa).

A signal peptide (tat-type signal) is located at residues 1–45 (MLIRHAPDLTDNDVTDHSLYLKRRTLMAGVAGLGVAGASASHAQA). Mo-molybdopterin-binding positions include Asn69, 72 to 73 (YE), Cys127, Thr162, Asn210, Arg215, and 226 to 228 (GIK).

Belongs to the MsrP family. As to quaternary structure, heterodimer of a catalytic subunit (MsrP) and a heme-binding subunit (MsrQ). It depends on Mo-molybdopterin as a cofactor. Post-translationally, predicted to be exported by the Tat system. The position of the signal peptide cleavage has not been experimentally proven.

The protein resides in the periplasm. The catalysed reaction is L-methionyl-[protein] + a quinone + H2O = L-methionyl-(S)-S-oxide-[protein] + a quinol. It carries out the reaction L-methionyl-[protein] + a quinone + H2O = L-methionyl-(R)-S-oxide-[protein] + a quinol. In terms of biological role, part of the MsrPQ system that repairs oxidized periplasmic proteins containing methionine sulfoxide residues (Met-O), using respiratory chain electrons. Thus protects these proteins from oxidative-stress damage caused by reactive species of oxygen and chlorine generated by the host defense mechanisms. MsrPQ is essential for the maintenance of envelope integrity under bleach stress, rescuing a wide series of structurally unrelated periplasmic proteins from methionine oxidation. The catalytic subunit MsrP is non-stereospecific, being able to reduce both (R-) and (S-) diastereoisomers of methionine sulfoxide. The chain is Protein-methionine-sulfoxide reductase catalytic subunit MsrP from Caulobacter vibrioides (strain ATCC 19089 / CIP 103742 / CB 15) (Caulobacter crescentus).